Here is a 622-residue protein sequence, read N- to C-terminus: Probable potassium transport system protein Kup (622 aa).

The next 12 membrane-spanning stretches (helical) occupy residues 8-28 (LAAL…TSVL), 50-70 (VLSI…VVLV), 103-123 (LGIG…TPAI), 137-157 (PHFG…LFAV), 169-189 (FGPV…PHIV), 215-235 (FIIL…YADL), 247-267 (WFSV…ALLL), 285-305 (ALIP…QALI), 337-357 (IYIP…VVMF), 366-386 (AYGI…FFVI), 393-413 (PLAL…AFFG), and 419-439 (LLQG…LMMT).

It belongs to the HAK/KUP transporter (TC 2.A.72) family.

It is found in the cell inner membrane. The enzyme catalyses K(+)(in) + H(+)(in) = K(+)(out) + H(+)(out). In terms of biological role, transport of potassium into the cell. Likely operates as a K(+):H(+) symporter. In Paracidovorax citrulli (strain AAC00-1) (Acidovorax citrulli), this protein is Probable potassium transport system protein Kup.